A 169-amino-acid chain; its full sequence is S-ribosylhomocysteine lyase (169 aa).

3 residues coordinate Fe cation: histidine 54, histidine 58, and cysteine 128.

This sequence belongs to the LuxS family. In terms of assembly, homodimer. Requires Fe cation as cofactor.

It catalyses the reaction S-(5-deoxy-D-ribos-5-yl)-L-homocysteine = (S)-4,5-dihydroxypentane-2,3-dione + L-homocysteine. Functionally, involved in the synthesis of autoinducer 2 (AI-2) which is secreted by bacteria and is used to communicate both the cell density and the metabolic potential of the environment. The regulation of gene expression in response to changes in cell density is called quorum sensing. Catalyzes the transformation of S-ribosylhomocysteine (RHC) to homocysteine (HC) and 4,5-dihydroxy-2,3-pentadione (DPD). The polypeptide is S-ribosylhomocysteine lyase (Sulfurovum sp. (strain NBC37-1)).